Consider the following 246-residue polypeptide: Alpha-tubulin N-acetyltransferase (246 aa).

The N-acetyltransferase domain occupies 21–202 (LTLVPDGVSR…NNFVVFHSFF (182 aa)). Residues 135–148 (FYVD…GYGK) and 172–181 (SNKLLGFLRK) each bind acetyl-CoA.

The protein belongs to the acetyltransferase ATAT1 family.

The catalysed reaction is L-lysyl-[alpha-tubulin] + acetyl-CoA = N(6)-acetyl-L-lysyl-[alpha-tubulin] + CoA + H(+). In terms of biological role, specifically acetylates 'Lys-40' in alpha-tubulin on the lumenal side of microtubules. Promotes microtubule destabilization and accelerates microtubule dynamics; this activity may be independent of acetylation activity. Acetylates alpha-tubulin with a slow enzymatic rate, due to a catalytic site that is not optimized for acetyl transfer. Enters the microtubule through each end and diffuses quickly throughout the lumen of microtubules. Acetylates only long/old microtubules because of its slow acetylation rate since it does not have time to act on dynamically unstable microtubules before the enzyme is released. This chain is Alpha-tubulin N-acetyltransferase, found in Leishmania infantum.